Reading from the N-terminus, the 76-residue chain is Translational regulator CsrA (76 aa).

This sequence belongs to the CsrA/RsmA family. In terms of assembly, homodimer; the beta-strands of each monomer intercalate to form a hydrophobic core, while the alpha-helices form wings that extend away from the core.

It is found in the cytoplasm. Its function is as follows. A translational regulator that binds mRNA to regulate translation initiation and/or mRNA stability. Usually binds in the 5'-UTR at or near the Shine-Dalgarno sequence preventing ribosome-binding, thus repressing translation. Its main target seems to be the major flagellin gene, while its function is anatagonized by FliW. This is Translational regulator CsrA from Wolinella succinogenes (strain ATCC 29543 / DSM 1740 / CCUG 13145 / JCM 31913 / LMG 7466 / NCTC 11488 / FDC 602W) (Vibrio succinogenes).